The sequence spans 164 residues: SsrA-binding protein (164 aa).

Belongs to the SmpB family.

The protein localises to the cytoplasm. Functionally, required for rescue of stalled ribosomes mediated by trans-translation. Binds to transfer-messenger RNA (tmRNA), required for stable association of tmRNA with ribosomes. tmRNA and SmpB together mimic tRNA shape, replacing the anticodon stem-loop with SmpB. tmRNA is encoded by the ssrA gene; the 2 termini fold to resemble tRNA(Ala) and it encodes a 'tag peptide', a short internal open reading frame. During trans-translation Ala-aminoacylated tmRNA acts like a tRNA, entering the A-site of stalled ribosomes, displacing the stalled mRNA. The ribosome then switches to translate the ORF on the tmRNA; the nascent peptide is terminated with the 'tag peptide' encoded by the tmRNA and targeted for degradation. The ribosome is freed to recommence translation, which seems to be the essential function of trans-translation. The sequence is that of SsrA-binding protein from Corynebacterium glutamicum (strain R).